We begin with the raw amino-acid sequence, 59 residues long: Putative HTH-type transcriptional regulator YneL (59 aa).

Residues 1–59 enclose the HTH araC/xylS-type domain; it reads MSPLRYQKWLRLNEVRRQMLNEHYDVTTAAYAVGYESYPISVGNIRGCLESHPREILPG. Positions 26 to 49 form a DNA-binding region, H-T-H motif; that stretch reads VTTAAYAVGYESYPISVGNIRGCL.

This Escherichia coli (strain K12) protein is Putative HTH-type transcriptional regulator YneL (yneL).